The chain runs to 501 residues: Aldehyde dehydrogenase mpl4 (501 aa).

231–236 (GSTASG) is an NAD(+) binding site. Active-site residues include Glu-253 and Cys-287.

The protein belongs to the aldehyde dehydrogenase family.

The enzyme catalyses an aldehyde + NAD(+) + H2O = a carboxylate + NADH + 2 H(+). Its pathway is mycotoxin biosynthesis. In terms of biological role, aldehyde dehydrogenase; part of the gene cluster that mediates the biosynthesis of the mycotoxin citrinin, a hepato-nephrotoxic compound to humans due to inhibition of respiration complex III. The pathway begins with the synthesis of a keto-aldehyde intermediate by the citrinin PKS (pksCT) from successive condensations of 4 malonyl-CoA units, presumably with a simple acetyl-CoA starter unit. Release of the keto-aldehyde intermediate is consistent with the presence of the C-terminal reductive release domain. Mp11 collaborates with pksCT by catalyzing the hydrolysis of ACP-bound acyl intermediates to free the ACP from stalled intermediates. Mpl2 then catalyzes the oxidation of the C-12 methyl of the ketone intermediate to an alcohol intermediate which is further oxidized by the oxidoreductase mpl7 to produce a bisaldehyde intermediate. The fourth catalytic step is catalyzed by the mpl4 aldehyde dehydrogenase. The final transformation is the reduction of C-3 by mpl6 to provide the chemically stable citrinin nucleus. This Monascus purpureus (Red mold) protein is Aldehyde dehydrogenase mpl4.